The sequence spans 214 residues: Octanoyltransferase (214 aa).

In terms of domain architecture, BPL/LPL catalytic spans 35 to 211; the sequence is KSNIDFIWLG…IIQEEFYFNF (177 aa). Substrate contacts are provided by residues 75-82, 142-144, and 155-157; these read RGGEVTCH, SIG, and GFS. Catalysis depends on C173, which acts as the Acyl-thioester intermediate.

This sequence belongs to the LipB family.

It is found in the cytoplasm. It catalyses the reaction octanoyl-[ACP] + L-lysyl-[protein] = N(6)-octanoyl-L-lysyl-[protein] + holo-[ACP] + H(+). Its pathway is protein modification; protein lipoylation via endogenous pathway; protein N(6)-(lipoyl)lysine from octanoyl-[acyl-carrier-protein]: step 1/2. Its function is as follows. Catalyzes the transfer of endogenously produced octanoic acid from octanoyl-acyl-carrier-protein onto the lipoyl domains of lipoate-dependent enzymes. Lipoyl-ACP can also act as a substrate although octanoyl-ACP is likely to be the physiological substrate. The sequence is that of Octanoyltransferase from Prochlorococcus marinus (strain MIT 9515).